The following is a 371-amino-acid chain: uncharacterized protein (371 aa).

3 Solcar repeats span residues 3–98, 131–276, and 284–369; these read DDSL…CKVL, RYWG…FKSF, and KSNF…VRKW. The next 6 helical transmembrane spans lie at 9 to 29, 73 to 93, 137 to 157, 253 to 273, 290 to 310, and 341 to 362; these read AIAG…LDVV, GVGP…VVYE, IFSA…IWVV, LFPS…YEYF, VLAA…HEVL, and YYSG…TFLS.

The protein belongs to the mitochondrial carrier (TC 2.A.29) family.

Its subcellular location is the mitochondrion inner membrane. This is an uncharacterized protein from Schizosaccharomyces pombe (strain 972 / ATCC 24843) (Fission yeast).